The chain runs to 881 residues: Alanine--tRNA ligase (881 aa).

The Zn(2+) site is built by H564, H568, C666, and H670.

This sequence belongs to the class-II aminoacyl-tRNA synthetase family. Zn(2+) serves as cofactor.

It localises to the cytoplasm. It carries out the reaction tRNA(Ala) + L-alanine + ATP = L-alanyl-tRNA(Ala) + AMP + diphosphate. Its function is as follows. Catalyzes the attachment of alanine to tRNA(Ala) in a two-step reaction: alanine is first activated by ATP to form Ala-AMP and then transferred to the acceptor end of tRNA(Ala). Also edits incorrectly charged Ser-tRNA(Ala) and Gly-tRNA(Ala) via its editing domain. The polypeptide is Alanine--tRNA ligase (Caldicellulosiruptor saccharolyticus (strain ATCC 43494 / DSM 8903 / Tp8T 6331)).